The following is a 128-amino-acid chain: Glycine cleavage system H protein (128 aa).

A Lipoyl-binding domain is found at 22–104 (TVLVGITDYA…YGEGWIFRLK (83 aa)). K63 is subject to N6-lipoyllysine.

This sequence belongs to the GcvH family. In terms of assembly, the glycine cleavage system is composed of four proteins: P, T, L and H. The cofactor is (R)-lipoate.

Functionally, the glycine cleavage system catalyzes the degradation of glycine. The H protein shuttles the methylamine group of glycine from the P protein to the T protein. This is Glycine cleavage system H protein from Thermus thermophilus (strain ATCC BAA-163 / DSM 7039 / HB27).